A 151-amino-acid chain; its full sequence is Non-specific lipid transfer protein GPI-anchored 30 (151 aa).

Positions 1–22 (MMMGMKFFSFYVVLLLVAASSG) are cleaved as a signal peptide. Disulfide bonds link Cys-32–Cys-69, Cys-39–Cys-53, Cys-54–Cys-97, and Cys-67–Cys-106. N-linked (GlcNAc...) asparagine glycosylation is present at Asn-44. Ser-120 carries the GPI-anchor amidated serine lipid modification. Residues 121 to 151 (SSIGNTFSQSYWMTTLAIAATVLSYCHHIIS) constitute a propeptide, removed in mature form.

Belongs to the plant LTP family. As to expression, expressed in vascular tissues of all organs. Expressed in seedlings, preferentially in hypocotyls and roots. Also observed in siliques.

The protein localises to the cell membrane. Functionally, lipid transfer protein that promotes the number of phloem (pro)cambial and pericycle cells. This chain is Non-specific lipid transfer protein GPI-anchored 30, found in Arabidopsis thaliana (Mouse-ear cress).